Consider the following 184-residue polypeptide: ATP-dependent protease subunit HslV (184 aa).

Thr-12 is a catalytic residue. Na(+) is bound by residues Ala-166, Cys-169, and Thr-172.

This sequence belongs to the peptidase T1B family. HslV subfamily. As to quaternary structure, a double ring-shaped homohexamer of HslV is capped on each side by a ring-shaped HslU homohexamer. The assembly of the HslU/HslV complex is dependent on binding of ATP.

The protein localises to the cytoplasm. The catalysed reaction is ATP-dependent cleavage of peptide bonds with broad specificity.. Allosterically activated by HslU binding. Protease subunit of a proteasome-like degradation complex believed to be a general protein degrading machinery. The chain is ATP-dependent protease subunit HslV from Brucella ovis (strain ATCC 25840 / 63/290 / NCTC 10512).